Here is a 612-residue protein sequence, read N- to C-terminus: Breast cancer type 1 susceptibility protein homolog (612 aa).

The RING-type zinc-finger motif lies at 21 to 61 (CGICCSTYKDPILSTCFHIFCRSCINACFERKRKVQCPICR). The segment at 140–173 (RRKRPSRPQPPSAFAEEPAEPVEPPEPATKQPVE) is disordered. BRCT domains are found at residues 415–477 (RFAE…DYTI) and 505–603 (EHGK…PYKA).

As to quaternary structure, heterodimer (via RING-type zinc finger) with brd-1 to form the core CeBCD complex. Brc-1-brd-1 heterodimer-containing CeBCD complexes bound to chromatin are activated as an E3-ubiquitin ligase in response to DNA damage. The heterodimer interacts with the recombinase rad-51 following ionizing irradiation; the interaction is direct. The heterodimer interacts the E2-ubiquitin-conjugating enzyme let-70 following ionizing irradiation. The heterodimer interacts with the pro-crossover proteins msh-5 and syp-3. Phosphorylation of CeBCD complexes is required for E3 ubiquitin-protein ligase activity.

It is found in the nucleus. The protein localises to the chromosome. The protein resides in the cytoplasm. It carries out the reaction S-ubiquitinyl-[E2 ubiquitin-conjugating enzyme]-L-cysteine + [acceptor protein]-L-lysine = [E2 ubiquitin-conjugating enzyme]-L-cysteine + N(6)-ubiquitinyl-[acceptor protein]-L-lysine.. It functions in the pathway protein modification; protein ubiquitination. Its activity is regulated as follows. E3 ubiquitin-protein ligase activity of CeBCD complexes occurs at DNA damage sites. Following DNA damage, E3 ubiquitin-protein ligase activity is reduced by caffeine treatment (inhibitor of ATM and ATK kinase activity). Functionally, E3 ubiquitin-protein ligase that specifically mediates the formation of polyubiquitin chains and plays a central role in DNA repair. Plays a role in triggering cellular responses at damage sites in response to DNA damage that may be induced by UV and ionizing radiation for example. Functions in double-strand break repair, and is required for homologous recombination between sister chromatids in meiotic and mitotic cells. In particular, protects against chromosome non-disjunction and nuclear fragmentation during meiotic double-strand break repair to ensure sister chromatid recombination and aid chromosome stability. Required for normal cell cycle progression. Along with brap-2 modulates the expression of cell cycle arrest protein cki-1 in response to increased levels of reactive oxygen species. Constituent of the CeBCD complex that possesses E3 ubiquitin-protein ligase activity. When bound to chromatin, the brc-1-brd-1 heterodimer within the CeBCD complex is inactive during normal conditions, but in response to DNA damage, the brc-1-brd-1 heterodimer associates with other proteins such as the recombinase rad-51 or the E2-ubiquitin-conjugating enzyme let-70, which activate the CeBCD complex as an E3-ubiquitin ligase. Moreover, association between the brc-1-brd-1 heterodimer and rad-51 and let-70, probably requires DNA checkpoint proteins such as atl-1 and mre-11 in order to induce ubiquitination at DNA damage sites. To this end, the brc-1-brd-1 heterodimer coordinates a diverse range of cellular pathways such as DNA damage repair, ubiquitination and transcriptional regulation to maintain genomic stability. This chain is Breast cancer type 1 susceptibility protein homolog, found in Caenorhabditis elegans.